Reading from the N-terminus, the 402-residue chain is uncharacterized protein (402 aa).

The Cytoplasmic portion of the chain corresponds to 1-12 (MFQQLSASIRHN). Residues 13–33 (AHIIFLCISWYFISSLASQVT) traverse the membrane as a helical segment. Residues 34 to 50 (KQVLTVCPLPLFLGEFQ) are Extracellular-facing. The chain crosses the membrane as a helical span at residues 51 to 71 (FIYTAVLAWFTCYIAYSFPGF). The Cytoplasmic portion of the chain corresponds to 72-103 (YRIFPNGTFPEYYIDDRETSRAARKESKLSSL). A helical membrane pass occupies residues 104–124 (IIPPSKPILQTVLPLGLFQFV). The Extracellular segment spans residues 125–134 (GKYFGHTATS). A helical transmembrane segment spans residues 135-155 (LVPVSTVASIKTLSPMFILLL). Residues 156-165 (QKILKISTLK) are Cytoplasmic-facing. A helical membrane pass occupies residues 166–186 (ITLTLIFSLCTLVLGVWIIVQ). Residues 187-206 (EDNRSPASSNELREFSKYGV) are Extracellular-facing. The chain crosses the membrane as a helical span at residues 207–227 (ICAMISMFIFVLQNIYGKTVF). At 228–271 (TYRSQTDESQSNSGFSRQESPLPLYEKLDEKLVAKKKPKSYDKL) the chain is on the cytoplasmic side. The chain crosses the membrane as a helical span at residues 272 to 292 (TLMIYISLVGFCLSFGWFITL). The Extracellular portion of the chain corresponds to 293–353 (EFPVLFRYFF…TYSIANLMKR (61 aa)). The helical transmembrane segment at 354-374 (FAIIAVSWVFIGRRITWLQVF) threads the bilayer. Topologically, residues 375 to 402 (GLVLNTLGLFLYERCTSQSKIKAKIRPE) are cytoplasmic.

The protein belongs to the TPT transporter family.

It is found in the membrane. This is an uncharacterized protein from Saccharomyces cerevisiae (strain ATCC 204508 / S288c) (Baker's yeast).